Consider the following 192-residue polypeptide: Probable GTP-binding protein EngB (192 aa).

Residues 22-192 (QLPEIVFVGR…LLEQLAIYTG (171 aa)) form the EngB-type G domain. Residues 30–37 (GRSNVGKS), 57–61 (GKTQL), 75–78 (DLPG), 142–145 (TKYD), and 172–174 (YSA) contribute to the GTP site. Residues Ser-37 and Thr-59 each coordinate Mg(2+).

This sequence belongs to the TRAFAC class TrmE-Era-EngA-EngB-Septin-like GTPase superfamily. EngB GTPase family. Requires Mg(2+) as cofactor.

In terms of biological role, necessary for normal cell division and for the maintenance of normal septation. In Chlorobium phaeobacteroides (strain BS1), this protein is Probable GTP-binding protein EngB.